The primary structure comprises 1124 residues: Sodium/hydrogen exchanger 11 (1124 aa).

A run of 11 helical transmembrane segments spans residues 25–45 (LVEE…GGLL), 52–72 (CEVI…HMAY), 90–110 (FSLY…DVEF), 120–140 (VLLT…YVVI), 179–199 (IYID…SIFF), 224–244 (DILG…CILA), 254–274 (IILC…LGMS), 305–325 (IFSS…IGCG), 335–355 (IPFI…TILL), 372–392 (GVVI…APDV), and 405–425 (MFIL…SYVM). 2 N-linked (GlcNAc...) asparagine glycosylation sites follow: asparagine 447 and asparagine 473. 4 helical membrane passes run 612-632 (TGQI…WPMA), 641-661 (ISIN…KIII), 674-694 (LEFF…FVKL), and 706-726 (VIMG…IVPI). The interval 642-723 (SINYYFMFLY…IRFLPLFKII (82 aa)) is ion transport-like. 867–999 (IWLEGKDVLI…EYKIWLKLAL (133 aa)) provides a ligand contact to a nucleoside 3',5'-cyclic phosphate.

This sequence belongs to the monovalent cation:proton antiporter 1 (CPA1) transporter (TC 2.A.36) family.

The protein resides in the membrane. Functionally, involved in pH regulation. The sequence is that of Sodium/hydrogen exchanger 11 (SLC9C2) from Homo sapiens (Human).